A 214-amino-acid polypeptide reads, in one-letter code: Cytochrome c biogenesis ATP-binding export protein CcmA (214 aa).

Positions 8–212 (LYAADLACLK…PPTVLDLSEV (205 aa)) constitute an ABC transporter domain. 40–47 (GPNGFGKT) contributes to the ATP binding site.

This sequence belongs to the ABC transporter superfamily. CcmA exporter (TC 3.A.1.107) family. In terms of assembly, the complex is composed of two ATP-binding proteins (CcmA) and two transmembrane proteins (CcmB).

It localises to the cell inner membrane. The enzyme catalyses heme b(in) + ATP + H2O = heme b(out) + ADP + phosphate + H(+). Its function is as follows. Part of the ABC transporter complex CcmAB involved in the biogenesis of c-type cytochromes; once thought to export heme, this seems not to be the case, but its exact role is uncertain. Responsible for energy coupling to the transport system. This Aromatoleum aromaticum (strain DSM 19018 / LMG 30748 / EbN1) (Azoarcus sp. (strain EbN1)) protein is Cytochrome c biogenesis ATP-binding export protein CcmA.